A 209-amino-acid chain; its full sequence is MKNLVVVDHPLIKHKLTIMRDKNTGPKEFRELLREITLLLAYEATRHLKCEEVEVETPITKTIGYRINDKDVVVVPILRAGLVMADGILELLPNASVGHIGIYRDPETLQAVEYYAKLPPLNDDKEVFLLDPMLATGVSSVKAIEILKENGAKKITLVALIAAPEGVEAVERKYKDVKIYVAALDERLNDHGYIIPGLGDAGDRLFRTK.

5-phospho-alpha-D-ribose 1-diphosphate contacts are provided by residues Arg-79, Arg-104, and 131 to 139; that span reads DPMLATGVS. Uracil contacts are provided by residues Ile-194 and 199 to 201; that span reads GDA. Asp-200 is a 5-phospho-alpha-D-ribose 1-diphosphate binding site.

It belongs to the UPRTase family. It depends on Mg(2+) as a cofactor.

The catalysed reaction is UMP + diphosphate = 5-phospho-alpha-D-ribose 1-diphosphate + uracil. It functions in the pathway pyrimidine metabolism; UMP biosynthesis via salvage pathway; UMP from uracil: step 1/1. Allosterically activated by GTP. In terms of biological role, catalyzes the conversion of uracil and 5-phospho-alpha-D-ribose 1-diphosphate (PRPP) to UMP and diphosphate. This Thermotoga petrophila (strain ATCC BAA-488 / DSM 13995 / JCM 10881 / RKU-1) protein is Uracil phosphoribosyltransferase.